We begin with the raw amino-acid sequence, 577 residues long: Arginine--tRNA ligase (577 aa).

A 'HIGH' region motif is present at residues 122–132 (PNVAKEMHVGH).

The protein belongs to the class-I aminoacyl-tRNA synthetase family. In terms of assembly, monomer.

The protein localises to the cytoplasm. It carries out the reaction tRNA(Arg) + L-arginine + ATP = L-arginyl-tRNA(Arg) + AMP + diphosphate. This is Arginine--tRNA ligase from Escherichia coli (strain ATCC 8739 / DSM 1576 / NBRC 3972 / NCIMB 8545 / WDCM 00012 / Crooks).